We begin with the raw amino-acid sequence, 28 residues long: MSSLWWCFVWLISIPVICLTFTFVMRLL.

This is an uncharacterized protein from Escherichia coli (Bacteriophage T4).